Reading from the N-terminus, the 220-residue chain is CRIB domain-containing protein RIC3 (220 aa).

Residues 28-41 form the CRIB domain; sequence IGFPTDVKHVAHIG. The tract at residues 39–220 is disordered; the sequence is HIGSDGPATN…CNDNNISDKE (182 aa). Residues 61–77 show a composition bias toward polar residues; it reads NENGQVVSRADANNNQI. The span at 108–121 shows a compositional bias: low complexity; it reads NGSPPRRNSSASAS. Basic residues-rich tracts occupy residues 127 to 136 and 172 to 184; these read NTRRHHRSRH and HSRKSTSRHRKPK. The span at 209–220 shows a compositional bias: polar residues; it reads DTCNDNNISDKE.

As to quaternary structure, interacts with ARAC11/ROP1. As to expression, expressed in flowers and pollen.

The protein localises to the cytoplasm. Functionally, functions as a downstream effector of Rho-related GTP binding proteins of the 'Rho of Plants' (ROPs) family. Participates in the propagation of ROP GTPase signals in specific cellular responses. Functions as a downstream effector of ARAC11/ROP1 to activate calcium signaling that leads to F-actin disassembly associated with exocytosis in the tip of the growing pollen tube. Counteracts the ARAC11/ROP1-RIC4 pathway, which promotes apical F-actin assembly associated with vesicle accumulation, to control actin dynamics and pollen tube apical growth. The protein is CRIB domain-containing protein RIC3 (RIC3) of Arabidopsis thaliana (Mouse-ear cress).